A 257-amino-acid polypeptide reads, in one-letter code: NAD-capped RNA hydrolase NudC (257 aa).

Residues lysine 27 and arginine 71 each coordinate substrate. Zn(2+) is bound by residues cysteine 100 and cysteine 103. Glutamate 113 serves as a coordination point for substrate. Positions 118 and 121 each coordinate Zn(2+). Tyrosine 126 is a binding site for substrate. The Nudix hydrolase domain occupies 127-251; that stretch reads PQIAPCIIVG…IARRLIEDTI (125 aa). Residues alanine 160, glutamate 176, and glutamate 180 each contribute to the a divalent metal cation site. The short motif at 161–182 is the Nudix box element; the sequence is GFVEVGETLEEAVVREVMEESN. Position 194-201 (194-201) interacts with substrate; that stretch reads QPWPFPHS. Position 221 (glutamate 221) interacts with a divalent metal cation. Substrate is bound at residue alanine 243.

This sequence belongs to the Nudix hydrolase family. NudC subfamily. Homodimer. Mg(2+) serves as cofactor. Requires Mn(2+) as cofactor. It depends on Zn(2+) as a cofactor.

It catalyses the reaction a 5'-end NAD(+)-phospho-ribonucleoside in mRNA + H2O = a 5'-end phospho-adenosine-phospho-ribonucleoside in mRNA + beta-nicotinamide D-ribonucleotide + 2 H(+). It carries out the reaction NAD(+) + H2O = beta-nicotinamide D-ribonucleotide + AMP + 2 H(+). The enzyme catalyses NADH + H2O = reduced beta-nicotinamide D-ribonucleotide + AMP + 2 H(+). MRNA decapping enzyme that specifically removes the nicotinamide adenine dinucleotide (NAD) cap from a subset of mRNAs by hydrolyzing the diphosphate linkage to produce nicotinamide mononucleotide (NMN) and 5' monophosphate mRNA. The NAD-cap is present at the 5'-end of some mRNAs and stabilizes RNA against 5'-processing. Has preference for mRNAs with a 5'-end purine. Catalyzes the hydrolysis of a broad range of dinucleotide pyrophosphates. This Photorhabdus laumondii subsp. laumondii (strain DSM 15139 / CIP 105565 / TT01) (Photorhabdus luminescens subsp. laumondii) protein is NAD-capped RNA hydrolase NudC.